The primary structure comprises 888 residues: Bifunctional uridylyltransferase/uridylyl-removing enzyme (888 aa).

A uridylyltransferase region spans residues 1 to 348; the sequence is MATTTDKQVS…YHFAEDKIEP (348 aa). The tract at residues 349-709 is uridylyl-removing; the sequence is INPRFRIINN…LQPTTSRGAT (361 aa). One can recognise an HD domain in the interval 468–590; the sequence is VDEHTILVIR…VGTQQRLDYL (123 aa). ACT domains are found at residues 710–787 and 817–888; these read ELII…DDTM and ELSI…NIEQ.

This sequence belongs to the GlnD family. The cofactor is Mg(2+).

The enzyme catalyses [protein-PII]-L-tyrosine + UTP = [protein-PII]-uridylyl-L-tyrosine + diphosphate. The catalysed reaction is [protein-PII]-uridylyl-L-tyrosine + H2O = [protein-PII]-L-tyrosine + UMP + H(+). With respect to regulation, uridylyltransferase (UTase) activity is inhibited by glutamine, while glutamine activates uridylyl-removing (UR) activity. Its function is as follows. Modifies, by uridylylation and deuridylylation, the PII regulatory proteins (GlnB and homologs), in response to the nitrogen status of the cell that GlnD senses through the glutamine level. Under low glutamine levels, catalyzes the conversion of the PII proteins and UTP to PII-UMP and PPi, while under higher glutamine levels, GlnD hydrolyzes PII-UMP to PII and UMP (deuridylylation). Thus, controls uridylylation state and activity of the PII proteins, and plays an important role in the regulation of nitrogen assimilation and metabolism. This is Bifunctional uridylyltransferase/uridylyl-removing enzyme from Hydrogenovibrio crunogenus (strain DSM 25203 / XCL-2) (Thiomicrospira crunogena).